Here is a 299-residue protein sequence, read N- to C-terminus: Glycine--tRNA ligase alpha subunit (299 aa).

The protein belongs to the class-II aminoacyl-tRNA synthetase family. Tetramer of two alpha and two beta subunits.

It localises to the cytoplasm. It catalyses the reaction tRNA(Gly) + glycine + ATP = glycyl-tRNA(Gly) + AMP + diphosphate. The sequence is that of Glycine--tRNA ligase alpha subunit (glyQ) from Synechocystis sp. (strain ATCC 27184 / PCC 6803 / Kazusa).